Here is a 98-residue protein sequence, read N- to C-terminus: NADH-ubiquinone oxidoreductase chain 4L (98 aa).

Transmembrane regions (helical) follow at residues M1–M21, L26–L46, and I61–I81.

The protein belongs to the complex I subunit 4L family. In terms of assembly, core subunit of respiratory chain NADH dehydrogenase (Complex I) which is composed of 45 different subunits.

The protein resides in the mitochondrion inner membrane. It catalyses the reaction a ubiquinone + NADH + 5 H(+)(in) = a ubiquinol + NAD(+) + 4 H(+)(out). Its function is as follows. Core subunit of the mitochondrial membrane respiratory chain NADH dehydrogenase (Complex I) which catalyzes electron transfer from NADH through the respiratory chain, using ubiquinone as an electron acceptor. Part of the enzyme membrane arm which is embedded in the lipid bilayer and involved in proton translocation. In Physeter macrocephalus (Sperm whale), this protein is NADH-ubiquinone oxidoreductase chain 4L (MT-ND4L).